Consider the following 812-residue polypeptide: Probable phosphoketolase (812 aa).

This sequence belongs to the XFP family. Thiamine diphosphate is required as a cofactor.

The chain is Probable phosphoketolase from Thermosynechococcus vestitus (strain NIES-2133 / IAM M-273 / BP-1).